Here is a 254-residue protein sequence, read N- to C-terminus: Flavin-dependent thymidylate synthase (254 aa).

Residues 7-237 (LRVQLIAKTE…PAVFADFEIT (231 aa)) enclose the ThyX domain. DUMP-binding positions include 92 to 95 (ELIR), 103 to 107 (QLSQR), and His176. FAD-binding positions include 95 to 97 (RHR) and Gln103. A ThyX motif motif is present at residues 95-105 (RHRHFSYSQLS). FAD-binding positions include 192-194 (NYR) and His198. Residue Arg203 coordinates dUMP. Arg203 (involved in ionization of N3 of dUMP, leading to its activation) is an active-site residue.

The protein belongs to the thymidylate synthase ThyX family. In terms of assembly, homotetramer. The cofactor is FAD.

The catalysed reaction is dUMP + (6R)-5,10-methylene-5,6,7,8-tetrahydrofolate + NADPH + H(+) = dTMP + (6S)-5,6,7,8-tetrahydrofolate + NADP(+). It participates in pyrimidine metabolism; dTTP biosynthesis. Functionally, catalyzes the reductive methylation of 2'-deoxyuridine-5'-monophosphate (dUMP) to 2'-deoxythymidine-5'-monophosphate (dTMP) while utilizing 5,10-methylenetetrahydrofolate (mTHF) as the methyl donor, and NADPH and FADH(2) as the reductant. The chain is Flavin-dependent thymidylate synthase from Mycobacterium leprae (strain Br4923).